The following is a 176-amino-acid chain: Insulin-like growth factor 1 (176 aa).

Positions 45 to 73 (GPETLCGAELVDTLQFVCGERGFYFSKPT) are b. 3 disulfides stabilise this stretch: cysteine 50-cysteine 92, cysteine 62-cysteine 105, and cysteine 91-cysteine 96. A c region spans residues 74–85 (GYGPSSRRSHNR). Residues 86–106 (GIVDECCFQSCELRRLEMYCA) form an a region. Residues 107-114 (PVKSGKAA) form a d region. The propeptide at 115–176 (RSVRAQRHTD…GNTGGRNYRM (62 aa)) is e peptide. Residues 115–176 (RSVRAQRHTD…GNTGGRNYRM (62 aa)) are disordered. A compositionally biased stretch (basic and acidic residues) spans 140–161 (RGTERRTAQHPDKTKPKKEVHQ).

The protein belongs to the insulin family.

Its subcellular location is the secreted. Its function is as follows. The insulin-like growth factors, isolated from plasma, are structurally and functionally related to insulin but have a much higher growth-promoting activity. Acts as a ligand for IGF1R. Binds to the alpha subunit of IGF1R, leading to the activation of the intrinsic tyrosine kinase activity which autophosphorylates tyrosine residues in the beta subunit thus initiatiating a cascade of down-stream signaling events leading to activation of the PI3K-AKT/PKB and the Ras-MAPK pathways. Binds to integrins. Its binding to integrins and subsequent ternary complex formation with integrins and IGFR1 are essential for IGF1 signaling. The chain is Insulin-like growth factor 1 from Oncorhynchus mykiss (Rainbow trout).